The sequence spans 193 residues: Small ribosomal subunit protein uS7 (193 aa).

It belongs to the universal ribosomal protein uS7 family. As to quaternary structure, part of the 30S ribosomal subunit.

Its function is as follows. One of the primary rRNA binding proteins, it binds directly to 16S rRNA where it nucleates assembly of the head domain of the 30S subunit. Is located at the subunit interface close to the decoding center. This chain is Small ribosomal subunit protein uS7, found in Saccharolobus solfataricus (strain ATCC 35092 / DSM 1617 / JCM 11322 / P2) (Sulfolobus solfataricus).